Reading from the N-terminus, the 126-residue chain is UPF0102 protein P9303_16141 (126 aa).

This sequence belongs to the UPF0102 family.

This chain is UPF0102 protein P9303_16141, found in Prochlorococcus marinus (strain MIT 9303).